Reading from the N-terminus, the 20-residue chain is DnaJ homolog subfamily C member 1 (20 aa).

The Lumenal portion of the chain corresponds to 1–20 (WESGDLELFDLVEEVXLNFY). Positions 18 to 20 (NFY) constitute a J domain.

As to quaternary structure, interacts (via SANT 2 domain) with SERPINA3; the interaction delays the formation of the covalent inhibitory complex SERPINA3-chymotrypsin, but does not alter the catalytic activity of SERPINA3. Interacts (via SANT 2 domain) with ITIH4 (via C-terminus); the interaction protects ITIH4 against in vitro cleavage by kallikrein. Interacts (via J domain) with HSPA5. Interacts (via cytosolic domain) with ribosomes.

The protein localises to the endoplasmic reticulum membrane. It localises to the nucleus membrane. It is found in the microsome membrane. This Canis lupus familiaris (Dog) protein is DnaJ homolog subfamily C member 1 (DNAJC1).